The chain runs to 123 residues: Small ribosomal subunit protein uS12 (123 aa).

Position 89 is a 3-methylthioaspartic acid (Asp89).

Belongs to the universal ribosomal protein uS12 family. As to quaternary structure, part of the 30S ribosomal subunit. Contacts proteins S8 and S17. May interact with IF1 in the 30S initiation complex.

Functionally, with S4 and S5 plays an important role in translational accuracy. In terms of biological role, interacts with and stabilizes bases of the 16S rRNA that are involved in tRNA selection in the A site and with the mRNA backbone. Located at the interface of the 30S and 50S subunits, it traverses the body of the 30S subunit contacting proteins on the other side and probably holding the rRNA structure together. The combined cluster of proteins S8, S12 and S17 appears to hold together the shoulder and platform of the 30S subunit. This chain is Small ribosomal subunit protein uS12, found in Mesorhizobium japonicum (strain LMG 29417 / CECT 9101 / MAFF 303099) (Mesorhizobium loti (strain MAFF 303099)).